The chain runs to 147 residues: Hemoglobin subunit delta (147 aa).

Positions Asn-3–His-147 constitute a Globin domain. Heme b contacts are provided by His-64 and His-93.

This sequence belongs to the globin family. In terms of assembly, heterotetramer of two delta chains and two alpha chains. In terms of tissue distribution, red blood cells.

The sequence is that of Hemoglobin subunit delta (HBD) from Elephas maximus (Indian elephant).